The chain runs to 55 residues: Small polypeptide DEVIL 10 (55 aa).

N-linked (GlcNAc...) asparagine glycosylation is present at Asn7. The interval 19–50 (RFGDRCLLMAKQQRTRLYILRRCVSMLLCWHD) is required for DVL/RTFL small polypeptide activity. A helical transmembrane segment spans residues 32 to 48 (RTRLYILRRCVSMLLCW).

Belongs to the DVL/RTFL small polypeptides family.

It is found in the cell membrane. In terms of biological role, small polypeptide acting as a regulatory molecule which coordinates cellular responses required for differentiation, growth and development, probably by restricting polar cell proliferation in lateral organs and coordinating socket cell recruitment and differentiation at trichome sites. The protein is Small polypeptide DEVIL 10 of Arabidopsis thaliana (Mouse-ear cress).